Reading from the N-terminus, the 331-residue chain is Ornithine carbamoyltransferase (331 aa).

Residues 57–60, Q82, R106, and 133–136 each bind carbamoyl phosphate; these read STRT and HPTQ. L-ornithine contacts are provided by residues N166, D230, and 234–235; that span reads SM. Residues 272–273 and R317 each bind carbamoyl phosphate; that span reads CL.

Belongs to the aspartate/ornithine carbamoyltransferase superfamily. OTCase family.

The protein localises to the cytoplasm. It carries out the reaction carbamoyl phosphate + L-ornithine = L-citrulline + phosphate + H(+). Its pathway is amino-acid degradation; L-arginine degradation via ADI pathway; carbamoyl phosphate from L-arginine: step 2/2. In terms of biological role, reversibly catalyzes the transfer of the carbamoyl group from carbamoyl phosphate (CP) to the N(epsilon) atom of ornithine (ORN) to produce L-citrulline. The chain is Ornithine carbamoyltransferase from Clostridium perfringens (strain SM101 / Type A).